Here is a 59-residue protein sequence, read N- to C-terminus: UPF0434 protein Sbal_1685 (59 aa).

Belongs to the UPF0434 family.

The protein is UPF0434 protein Sbal_1685 of Shewanella baltica (strain OS155 / ATCC BAA-1091).